The following is a 173-amino-acid chain: Large ribosomal subunit protein uL16 (173 aa).

The protein belongs to the universal ribosomal protein uL16 family.

The chain is Large ribosomal subunit protein uL16 from Methanococcus aeolicus (strain ATCC BAA-1280 / DSM 17508 / OCM 812 / Nankai-3).